A 132-amino-acid chain; its full sequence is Large ribosomal subunit protein bL19 (132 aa).

The protein belongs to the bacterial ribosomal protein bL19 family.

In terms of biological role, this protein is located at the 30S-50S ribosomal subunit interface and may play a role in the structure and function of the aminoacyl-tRNA binding site. The protein is Large ribosomal subunit protein bL19 of Methylobacterium radiotolerans (strain ATCC 27329 / DSM 1819 / JCM 2831 / NBRC 15690 / NCIMB 10815 / 0-1).